A 104-amino-acid polypeptide reads, in one-letter code: Large ribosomal subunit protein uL24 (104 aa).

It belongs to the universal ribosomal protein uL24 family. Part of the 50S ribosomal subunit.

Its function is as follows. One of two assembly initiator proteins, it binds directly to the 5'-end of the 23S rRNA, where it nucleates assembly of the 50S subunit. One of the proteins that surrounds the polypeptide exit tunnel on the outside of the subunit. This chain is Large ribosomal subunit protein uL24, found in Baumannia cicadellinicola subsp. Homalodisca coagulata.